Here is a 105-residue protein sequence, read N- to C-terminus: Met repressor (105 aa).

This sequence belongs to the MetJ family. In terms of assembly, homodimer.

The protein resides in the cytoplasm. Its function is as follows. This regulatory protein, when combined with SAM (S-adenosylmethionine) represses the expression of the methionine regulon and of enzymes involved in SAM synthesis. This is Met repressor from Proteus mirabilis (strain HI4320).